Consider the following 359-residue polypeptide: F-box protein At1g10895 (359 aa).

Positions 2 to 48 constitute an F-box domain; sequence TTMSDLDEIMVAEILCRTPMTCLKTVRSVCKKWNALSKKWFFFGKAK.

In Arabidopsis thaliana (Mouse-ear cress), this protein is F-box protein At1g10895.